A 200-amino-acid chain; its full sequence is 3-isopropylmalate dehydratase small subunit (200 aa).

Belongs to the LeuD family. LeuD type 1 subfamily. In terms of assembly, heterodimer of LeuC and LeuD.

It catalyses the reaction (2R,3S)-3-isopropylmalate = (2S)-2-isopropylmalate. The protein operates within amino-acid biosynthesis; L-leucine biosynthesis; L-leucine from 3-methyl-2-oxobutanoate: step 2/4. Catalyzes the isomerization between 2-isopropylmalate and 3-isopropylmalate, via the formation of 2-isopropylmaleate. In Proteus mirabilis (strain HI4320), this protein is 3-isopropylmalate dehydratase small subunit.